We begin with the raw amino-acid sequence, 229 residues long: Putative germin-like protein subfamily 1 member 2 (229 aa).

An N-terminal signal peptide occupies residues 1–24 (MKGLVQFLVAKIILLVLASTFVHC). A disulfide bridge connects residues cysteine 34 and cysteine 50. Residues asparagine 38 and asparagine 71 are each glycosylated (N-linked (GlcNAc...) asparagine). Residues 64-215 (SGLNIPGNTS…AFALDVNIVR (152 aa)) form the Cupin type-1 domain. Mn(2+) is bound by residues histidine 112 and histidine 114. The N-linked (GlcNAc...) asparagine glycan is linked to asparagine 139. A Mn(2+)-binding site is contributed by histidine 163.

The protein belongs to the germin family. In terms of assembly, oligomer (believed to be a pentamer but probably hexamer).

The protein resides in the secreted. It localises to the extracellular space. The protein localises to the apoplast. May play a role in plant defense. Probably has no oxalate oxidase activity even if the active site is conserved. This Arabidopsis thaliana (Mouse-ear cress) protein is Putative germin-like protein subfamily 1 member 2.